A 246-amino-acid chain; its full sequence is uncharacterized protein (246 aa).

A helical membrane pass occupies residues 7–29; it reads GRGALASTGGCVVLAVAALMFVF.

Its subcellular location is the membrane. This is an uncharacterized protein from Treponema pallidum (strain Nichols).